The primary structure comprises 693 residues: Bacterial dynamin-like protein (693 aa).

At 1–521 (MVNQVATDRF…DNSPGWAKWA (521 aa)) the chain is on the cytoplasmic side. Positions 66–313 (QQGVFRLLVL…QADLDGTGFP (248 aa)) constitute a Dynamin-type G domain. A G1 motif region spans residues 76–83 (GDMKRGKS). 79–84 (KRGKST) provides a ligand contact to GTP. The interval 102–103 (CT) is G2 motif. Residues 180-183 (DSPG) are G3 motif. Residue 235–241 (FLVNAWD) coordinates GTP. Residues 238-241 (NAWD) form a G4 motif region. A region of interest (G5 motif) is located at residue asparagine 268. A GTP-binding site is contributed by 292–293 (SI). The interval 311 to 571 (GFPKFMDSLN…TAVTGILLGP (261 aa)) is middle domain. Residues 347–378 (REAVARRIPLLEQDVNELKKRIDSVEPEFNKL) are a coiled coil. The stretch at 522-574 (MGLLSLSKGNLAGFALAGAGFDWKNILLNYFTVIGIGGIITAVTGILLGPIGF) is an intramembrane region. The paddle domain stretch occupies residues 572-606 (IGFALLGLGVGFLQADQARRELVKTAKKELVKHLP). Residues 575–693 (ALLGLGVGFL…AYSNLLAYYS (119 aa)) lie on the Cytoplasmic side of the membrane. Positions 607–693 (QVAHEQSQVV…AYSNLLAYYS (87 aa)) are GED. The stretch at 661–688 (ESEFNRLKNLQEDVIAQLQKIEAAYSNL) forms a coiled coil.

It belongs to the TRAFAC class dynamin-like GTPase superfamily. Dynamin/Fzo/YdjA family. Mitofusin subfamily. In terms of assembly, homodimer. Self-assembles in the presence of GMP-PNP and liposomes, and probably also in the presence of GTP.

The protein resides in the cell inner membrane. The catalysed reaction is GTP + H2O = GDP + phosphate + H(+). Functionally, dynamin-related GTPase probably involved in membrane remodeling. Lipid and nucleotide-binding are thought to induce a large intramolecular rearrangement, leading to assembly on lipid bilayers and possible membrane curving. In the presence of the non-hydrolyzable GTP analog GMP-PNP self-assembles on a lipid bilayer; this does not stimulate subsequent GTPase activity. Does not bind lipids in the presence of GDP; perhaps GTP hydrolysis disrupts membrane-binding. This Nostoc punctiforme (strain ATCC 29133 / PCC 73102) protein is Bacterial dynamin-like protein.